Consider the following 79-residue polypeptide: Putative antitoxin VapB1 (79 aa).

Functionally, antitoxin component of a possible type II toxin-antitoxin (TA) system. The cognate toxin is VapC1. In Mycobacterium tuberculosis (strain ATCC 25618 / H37Rv), this protein is Putative antitoxin VapB1 (vapB1).